A 166-amino-acid polypeptide reads, in one-letter code: Large ribosomal subunit protein uL10 (166 aa).

This sequence belongs to the universal ribosomal protein uL10 family. In terms of assembly, part of the ribosomal stalk of the 50S ribosomal subunit. The N-terminus interacts with L11 and the large rRNA to form the base of the stalk. The C-terminus forms an elongated spine to which L12 dimers bind in a sequential fashion forming a multimeric L10(L12)X complex.

In terms of biological role, forms part of the ribosomal stalk, playing a central role in the interaction of the ribosome with GTP-bound translation factors. This is Large ribosomal subunit protein uL10 from Enterococcus faecalis (strain ATCC 700802 / V583).